A 75-amino-acid chain; its full sequence is Brevinin-2SN2 (75 aa).

The signal sequence occupies residues 1–22 (MFTLKKPLLFLFFLGTISLSFC). A propeptide spans 23 to 40 (EEERGADEDDGGEMTEEE) (removed in mature form). A disulfide bridge connects residues C69 and C75.

Belongs to the frog skin active peptide (FSAP) family. Brevinin subfamily. In terms of tissue distribution, expressed by the skin glands.

Its subcellular location is the secreted. In terms of biological role, antimicrobial peptide. Active against some Gram-negative and a variety of Gram-positive bacterial strains. Active against fungus C.glabrata 090902 but not against C.albicans ATCC 10231. Shows hemolytic activity against human erythrocytes. The polypeptide is Brevinin-2SN2 (Sylvirana spinulosa (Fine-spined frog)).